The sequence spans 346 residues: Probable dual-specificity RNA methyltransferase RlmN (346 aa).

E76 (proton acceptor) is an active-site residue. The 233-residue stretch at S97–D329 folds into the Radical SAM core domain. A disulfide bond links C104 and C334. [4Fe-4S] cluster is bound by residues C111, C115, and C118. Residues G162–E163, S192, S215–N217, and N291 contribute to the S-adenosyl-L-methionine site. The active-site S-methylcysteine intermediate is C334.

The protein belongs to the radical SAM superfamily. RlmN family. [4Fe-4S] cluster is required as a cofactor.

It localises to the cytoplasm. The catalysed reaction is adenosine(2503) in 23S rRNA + 2 reduced [2Fe-2S]-[ferredoxin] + 2 S-adenosyl-L-methionine = 2-methyladenosine(2503) in 23S rRNA + 5'-deoxyadenosine + L-methionine + 2 oxidized [2Fe-2S]-[ferredoxin] + S-adenosyl-L-homocysteine. It catalyses the reaction adenosine(37) in tRNA + 2 reduced [2Fe-2S]-[ferredoxin] + 2 S-adenosyl-L-methionine = 2-methyladenosine(37) in tRNA + 5'-deoxyadenosine + L-methionine + 2 oxidized [2Fe-2S]-[ferredoxin] + S-adenosyl-L-homocysteine. In terms of biological role, specifically methylates position 2 of adenine 2503 in 23S rRNA and position 2 of adenine 37 in tRNAs. In Koribacter versatilis (strain Ellin345), this protein is Probable dual-specificity RNA methyltransferase RlmN.